Here is a 295-residue protein sequence, read N- to C-terminus: Chromatin modification-related protein YNG2 (295 aa).

Residues 151–208 (NGTAGSGSSSGRKRPASSSSANGKGQKRKQQKKERSRSHQRAGTVSRDVSPNAGIGRD) form a disordered region. The span at 156-171 (SGSSSGRKRPASSSSA) shows a compositional bias: low complexity. The segment covering 175–190 (GQKRKQQKKERSRSHQ) has biased composition (basic residues). Residues 233–282 (QLYCFCQRVSYGEMVACDGPNCKYEWFHYSCVNLTEPPKGQWYCPECRLE) form a PHD-type zinc finger. Zn(2+) contacts are provided by cysteine 236, cysteine 238, cysteine 249, cysteine 254, histidine 260, cysteine 263, cysteine 276, and cysteine 279.

It belongs to the ING family. Interacts with H3K4me3 and to a lesser extent with H3K4me2. Component of the NuA4 histone acetyltransferase complex.

It localises to the nucleus. Its function is as follows. Component of the NuA4 histone acetyltransferase complex which is involved in transcriptional activation of selected genes principally by acetylation of nucleosomal histone H4 and H2A. The NuA4 complex is also involved in DNA repair. Involved in cell cycle progression and meiosis. This Kluyveromyces lactis (strain ATCC 8585 / CBS 2359 / DSM 70799 / NBRC 1267 / NRRL Y-1140 / WM37) (Yeast) protein is Chromatin modification-related protein YNG2 (YNG2).